Here is a 243-residue protein sequence, read N- to C-terminus: Sugar fermentation stimulation protein homolog (243 aa).

It belongs to the SfsA family.

This Bdellovibrio bacteriovorus (strain ATCC 15356 / DSM 50701 / NCIMB 9529 / HD100) protein is Sugar fermentation stimulation protein homolog.